The sequence spans 99 residues: Leydig cell tumor 10 kDa protein homolog (99 aa).

A disordered region spans residues 1–37 (MAQGQRKFQARKPAKSKTAATASEKNRGPRKGGRVIA). The segment covering 28 to 37 (GPRKGGRVIA) has biased composition (basic residues).

It belongs to the UPF0390 family.

Functionally, may have a potential role in hypercalcemia of malignancy. This is Leydig cell tumor 10 kDa protein homolog from Pongo abelii (Sumatran orangutan).